Reading from the N-terminus, the 234-residue chain is Leucyl/phenylalanyl-tRNA--protein transferase (234 aa).

The protein belongs to the L/F-transferase family.

Its subcellular location is the cytoplasm. The catalysed reaction is N-terminal L-lysyl-[protein] + L-leucyl-tRNA(Leu) = N-terminal L-leucyl-L-lysyl-[protein] + tRNA(Leu) + H(+). It catalyses the reaction N-terminal L-arginyl-[protein] + L-leucyl-tRNA(Leu) = N-terminal L-leucyl-L-arginyl-[protein] + tRNA(Leu) + H(+). The enzyme catalyses L-phenylalanyl-tRNA(Phe) + an N-terminal L-alpha-aminoacyl-[protein] = an N-terminal L-phenylalanyl-L-alpha-aminoacyl-[protein] + tRNA(Phe). Its function is as follows. Functions in the N-end rule pathway of protein degradation where it conjugates Leu, Phe and, less efficiently, Met from aminoacyl-tRNAs to the N-termini of proteins containing an N-terminal arginine or lysine. This Pectobacterium atrosepticum (strain SCRI 1043 / ATCC BAA-672) (Erwinia carotovora subsp. atroseptica) protein is Leucyl/phenylalanyl-tRNA--protein transferase.